Consider the following 459-residue polypeptide: Diaminopimelate decarboxylase (459 aa).

K89 bears the N6-(pyridoxal phosphate)lysine mark. Residues G271 and 313–316 each bind pyridoxal 5'-phosphate; that span reads EPGR. 3 residues coordinate substrate: R316, R357, and Y361. The Proton donor role is filled by C388. Substrate-binding residues include E389 and Y418. Y418 contributes to the pyridoxal 5'-phosphate binding site.

Belongs to the Orn/Lys/Arg decarboxylase class-II family. LysA subfamily. Homodimer. Pyridoxal 5'-phosphate serves as cofactor.

The catalysed reaction is meso-2,6-diaminopimelate + H(+) = L-lysine + CO2. It participates in amino-acid biosynthesis; L-lysine biosynthesis via DAP pathway; L-lysine from DL-2,6-diaminopimelate: step 1/1. In terms of biological role, specifically catalyzes the decarboxylation of meso-diaminopimelate (meso-DAP) to L-lysine. This chain is Diaminopimelate decarboxylase, found in Corynebacterium efficiens (strain DSM 44549 / YS-314 / AJ 12310 / JCM 11189 / NBRC 100395).